Consider the following 210-residue polypeptide: Ion-translocating oxidoreductase complex subunit G (210 aa).

A helical transmembrane segment spans residues 9–29 (SLVLALFAIAATALVTITYAL). Threonine 176 is modified (FMN phosphoryl threonine).

Belongs to the RnfG family. In terms of assembly, the complex is composed of six subunits: RnfA, RnfB, RnfC, RnfD, RnfE and RnfG. It depends on FMN as a cofactor.

It localises to the cell inner membrane. Its function is as follows. Part of a membrane-bound complex that couples electron transfer with translocation of ions across the membrane. The chain is Ion-translocating oxidoreductase complex subunit G from Aliivibrio fischeri (strain MJ11) (Vibrio fischeri).